The sequence spans 66 residues: UPF0337 protein spyM18_1212 (66 aa).

Belongs to the UPF0337 (CsbD) family.

This is UPF0337 protein spyM18_1212 from Streptococcus pyogenes serotype M18 (strain MGAS8232).